Consider the following 153-residue polypeptide: Bacteriohemerythrin (153 aa).

Fe cation is bound by residues His21, His57, Glu61, His76, His80, His115, and Asp120.

This sequence belongs to the hemerythrin family. As to quaternary structure, monomer.

In terms of biological role, oxygen-binding protein. May be involved in a storage mechanism or for delivery to oxygen-requiring enzymes. The oxygen-binding site contains two iron atoms. This Pseudomonas aeruginosa (strain UCBPP-PA14) protein is Bacteriohemerythrin.